The following is a 141-amino-acid chain: U-scoloptoxin(17)-Er3a (141 aa).

The first 21 residues, 1-21, serve as a signal peptide directing secretion; sequence MKSTFALVFGILMVIAHLSFA.

Belongs to the scoloptoxin-17 family. In terms of processing, contains 3 disulfide bonds. As to expression, expressed by the venom gland.

Its subcellular location is the secreted. In Ethmostigmus rubripes (Giant centipede), this protein is U-scoloptoxin(17)-Er3a.